The sequence spans 413 residues: Eukaryotic initiation factor 4A-7 (413 aa).

The short motif at 40 to 68 (DSFDAMGLQENLLRGIYAYGFEKPSAIQQ) is the Q motif element. The region spanning 71 to 241 (IVPFCKGLDV…RKFMNKPVRI (171 aa)) is the Helicase ATP-binding domain. 84–91 (AQSGTGKT) serves as a coordination point for ATP. A DEAD box motif is present at residues 189–192 (DEAD). The Helicase C-terminal domain maps to 252 to 413 (GIKQFYVNVD…ELPANVADLL (162 aa)).

This sequence belongs to the DEAD box helicase family. eIF4A subfamily. In terms of assembly, eIF4F is a multi-subunit complex, the composition of which varies with external and internal environmental conditions. It is composed of at least EIF4A, EIF4E and EIF4G.

It catalyses the reaction ATP + H2O = ADP + phosphate + H(+). In terms of biological role, ATP-dependent RNA helicase which is a subunit of the eIF4F complex involved in cap recognition and is required for mRNA binding to ribosome. In the current model of translation initiation, eIF4A unwinds RNA secondary structures in the 5'-UTR of mRNAs which is necessary to allow efficient binding of the small ribosomal subunit, and subsequent scanning for the initiator codon. The sequence is that of Eukaryotic initiation factor 4A-7 from Nicotiana tabacum (Common tobacco).